Reading from the N-terminus, the 64-residue chain is Bacteriocin plantaricin ASM1 (64 aa).

A signal peptide spans 1 to 21 (MSKLVKTLTVDEISKIQTNGG). A cross-link (lanthionine (Ser-Cys)) is located at residues 61 to 64 (SYHC).

In terms of processing, contains 2 disulfide bonds.

It localises to the secreted. Functionally, bacteriocin with a narrow antibacterial spectrum. Antibacterial activity against the Gram-positive bacteria L.plantarun, L.pentosus, L.curvatus, L.lindneri, L.mesenteroides and E.faecilis. Lacks antibacterial activity against the Gram-positive bacteria L.brevis, L.sakei, L.lactis, P.acidilactici, B.subtilis, B.cereus, L.monocytogenes and S.aureus, and against the Gram-negative bacteria E.coli and S.typhimurium. The polypeptide is Bacteriocin plantaricin ASM1 (Lactiplantibacillus plantarum (Lactobacillus plantarum)).